The primary structure comprises 102 residues: Small ribosomal subunit protein uS10 (102 aa).

It belongs to the universal ribosomal protein uS10 family. In terms of assembly, part of the 30S ribosomal subunit.

Functionally, involved in the binding of tRNA to the ribosomes. The chain is Small ribosomal subunit protein uS10 from Streptococcus pneumoniae (strain CGSP14).